The chain runs to 307 residues: Dihydroorotate dehydrogenase B (NAD(+)), catalytic subunit (307 aa).

Residues serine 22 and 46–47 (KT) each bind FMN. Substrate is bound by residues lysine 46, 70–74 (NAVGL), and asparagine 128. FMN is bound at residue asparagine 128. The Nucleophile role is filled by cysteine 131. The FMN site is built by lysine 166 and isoleucine 192. 193 to 194 (NT) contacts substrate. FMN-binding positions include glycine 218, 244–245 (GG), and 266–267 (GT).

It belongs to the dihydroorotate dehydrogenase family. Type 1 subfamily. Heterotetramer of 2 PyrK and 2 PyrD type B subunits. FMN is required as a cofactor.

It localises to the cytoplasm. It carries out the reaction (S)-dihydroorotate + NAD(+) = orotate + NADH + H(+). Its pathway is pyrimidine metabolism; UMP biosynthesis via de novo pathway; orotate from (S)-dihydroorotate (NAD(+) route): step 1/1. In terms of biological role, catalyzes the conversion of dihydroorotate to orotate with NAD(+) as electron acceptor. This is Dihydroorotate dehydrogenase B (NAD(+)), catalytic subunit (pyrD) from Desulforudis audaxviator (strain MP104C).